The sequence spans 933 residues: Phosphoenolpyruvate carboxylase (933 aa).

Residues His158 and Lys592 contribute to the active site.

Belongs to the PEPCase type 1 family. Requires Mg(2+) as cofactor.

It catalyses the reaction oxaloacetate + phosphate = phosphoenolpyruvate + hydrogencarbonate. Forms oxaloacetate, a four-carbon dicarboxylic acid source for the tricarboxylic acid cycle. The protein is Phosphoenolpyruvate carboxylase of Nitrosomonas eutropha (strain DSM 101675 / C91 / Nm57).